The chain runs to 213 residues: Ras-related protein Rab-25 (213 aa).

GTP-binding residues include S21, G24, K25, T26, N27, S38, H39, T43, and T44. T26 provides a ligand contact to Mg(2+). 2 short sequence motifs (switch) span residues 35–49 and 67–84; these read NEFS…GVEF and DTAG…YYRG. 2 residues coordinate Mg(2+): T44 and D67. GTP is bound by residues G70, N125, K126, D128, A156, and L157. Residues C209 and C210 are each lipidated (S-geranylgeranyl cysteine). C210 bears the Cysteine methyl ester mark. Residues 211 to 213 constitute a propeptide, removed in mature form; sequence ISL.

This sequence belongs to the small GTPase superfamily. Rab family. As to quaternary structure, interacts (GTP-bound form) with RAB11FIP1, RAB11FIP2, RAB11FIP3 and RAB11FIP4. Interacts (via the hypervariable C-terminal region) with ITGB1 (via the cytoplasmic region); the interaction is GTP-dependent. Interacts with ITGAV. Associates with the integrin alpha-V/beta-1 heterodimer. Interacts with VPS33B. Requires Mg(2+) as cofactor.

Its subcellular location is the cell membrane. The protein resides in the cell projection. It is found in the pseudopodium membrane. It localises to the cytoplasmic vesicle. It catalyses the reaction GTP + H2O = GDP + phosphate + H(+). Its activity is regulated as follows. Regulated by guanine nucleotide exchange factors (GEFs) which promote the exchange of bound GDP for free GTP. Regulated by GTPase activating proteins (GAPs) which increase the GTP hydrolysis activity. Inhibited by GDP dissociation inhibitors (GDIs) which prevent Rab-GDP dissociation. Functionally, the small GTPases Rab are key regulators of intracellular membrane trafficking, from the formation of transport vesicles to their fusion with membranes. Rabs cycle between an inactive GDP-bound form and an active GTP-bound form that is able to recruit to membranes different set of downstream effectors directly responsible for vesicle formation, movement, tethering and fusion. RAB25 regulates epithelial cell differentiation, proliferation and survival, thereby playing key roles in tumorigenesis. Promotes invasive migration of cells in which it functions to localize and maintain integrin alpha-V/beta-1 at the tips of extending pseudopodia. Involved in the regulation of epithelial morphogenesis through the control of CLDN4 expression and localization at tight junctions. May selectively regulate the apical recycling pathway. Together with MYO5B regulates transcytosis. This Mus musculus (Mouse) protein is Ras-related protein Rab-25.